Reading from the N-terminus, the 439-residue chain is ATP-dependent RNA helicase RhlB (439 aa).

A Q motif motif is present at residues 9–37; the sequence is QKFADLPLHPEVKQALAENGFEFCTPIQA. The 180-residue stretch at 40–219 folds into the Helicase ATP-binding domain; sequence LPVLLQSKDI…YDHMNEPVKV (180 aa). 53–60 is a binding site for ATP; that stretch reads AQTGTGKT. The DEAD box motif lies at 165–168; sequence DEAD. Positions 243–390 constitute a Helicase C-terminal domain; the sequence is KMRLLLTLIE…VSNYDRDALL (148 aa). Residues 395–439 form a disordered region; it reads PPVKIHRRHPAGARNLRERSGAGRPQGAHRSGGRPPRHDRTRRQP. The span at 425-439 shows a compositional bias: basic residues; it reads SGGRPPRHDRTRRQP.

The protein belongs to the DEAD box helicase family. RhlB subfamily. In terms of assembly, component of the RNA degradosome, which is a multiprotein complex involved in RNA processing and mRNA degradation.

It localises to the cytoplasm. It carries out the reaction ATP + H2O = ADP + phosphate + H(+). In terms of biological role, DEAD-box RNA helicase involved in RNA degradation. Has RNA-dependent ATPase activity and unwinds double-stranded RNA. The polypeptide is ATP-dependent RNA helicase RhlB (Shewanella sp. (strain ANA-3)).